Consider the following 431-residue polypeptide: Glutamate--tRNA ligase 1 (431 aa).

Residues 6-16 (PSPTGDMHIGN) carry the 'HIGH' region motif. The 'KMSKS' region signature appears at 235-239 (KMSKR). Lysine 238 lines the ATP pocket.

This sequence belongs to the class-I aminoacyl-tRNA synthetase family. Glutamate--tRNA ligase type 1 subfamily. In terms of assembly, monomer.

It localises to the cytoplasm. The enzyme catalyses tRNA(Glu) + L-glutamate + ATP = L-glutamyl-tRNA(Glu) + AMP + diphosphate. Its function is as follows. Catalyzes the attachment of glutamate to tRNA(Glu) in a two-step reaction: glutamate is first activated by ATP to form Glu-AMP and then transferred to the acceptor end of tRNA(Glu). The chain is Glutamate--tRNA ligase 1 from Campylobacter jejuni (strain RM1221).